A 140-amino-acid polypeptide reads, in one-letter code: Large ribosomal subunit protein uL11 (140 aa).

Belongs to the universal ribosomal protein uL11 family. Part of the ribosomal stalk of the 50S ribosomal subunit. Interacts with L10 and the large rRNA to form the base of the stalk. L10 forms an elongated spine to which L12 dimers bind in a sequential fashion forming a multimeric L10(L12)X complex. Post-translationally, one or more lysine residues are methylated.

Its function is as follows. Forms part of the ribosomal stalk which helps the ribosome interact with GTP-bound translation factors. The chain is Large ribosomal subunit protein uL11 from Karelsulcia muelleri (strain GWSS) (Sulcia muelleri).